A 500-amino-acid chain; its full sequence is ATP synthase subunit alpha (500 aa).

169-176 (GDRQTGKT) contributes to the ATP binding site.

The protein belongs to the ATPase alpha/beta chains family. F-type ATPases have 2 components, CF(1) - the catalytic core - and CF(0) - the membrane proton channel. CF(1) has five subunits: alpha(3), beta(3), gamma(1), delta(1), epsilon(1). CF(0) has three main subunits: a(1), b(2) and c(9-12). The alpha and beta chains form an alternating ring which encloses part of the gamma chain. CF(1) is attached to CF(0) by a central stalk formed by the gamma and epsilon chains, while a peripheral stalk is formed by the delta and b chains.

The protein resides in the cell membrane. The catalysed reaction is ATP + H2O + 4 H(+)(in) = ADP + phosphate + 5 H(+)(out). Functionally, produces ATP from ADP in the presence of a proton gradient across the membrane. The alpha chain is a regulatory subunit. The polypeptide is ATP synthase subunit alpha (Lactococcus lactis subsp. cremoris (strain MG1363)).